Here is a 366-residue protein sequence, read N- to C-terminus: Alcohol dehydrogenase (366 aa).

Zn(2+) contacts are provided by cysteine 41, histidine 62, glutamate 63, and aspartate 167.

The protein belongs to the zinc-containing alcohol dehydrogenase family. Homotetramer. Zn(2+) is required as a cofactor.

It carries out the reaction a primary alcohol + NAD(+) = an aldehyde + NADH + H(+). The enzyme catalyses a secondary alcohol + NAD(+) = a ketone + NADH + H(+). It catalyses the reaction (R,R)-butane-2,3-diol + NAD(+) = (R)-acetoin + NADH + H(+). The catalysed reaction is an aldehyde + NAD(+) + H2O = a carboxylate + NADH + 2 H(+). Functionally, multifunctional alcohol dehydrogenase exhibiting NAD(+)-dependent dehydrogenase activities for 2,3-butanediol, ethanol and acetaldehyde, and reductase activities for acetoin (NADH-dependent), and diacetyl and acetaldehyde (independently of whether NADH or NADPH is the reductant). The rate of oxidation of 2,3-butanediol is much higher than for the oxidation of ethanol. Has acetaldehyde dehydrogenase activity leading to acetate formation. May function in the release of excess reducing power in the absence of exogenous hydrogen acceptors such as oxygen. In Cupriavidus necator (strain ATCC 17699 / DSM 428 / KCTC 22496 / NCIMB 10442 / H16 / Stanier 337) (Ralstonia eutropha), this protein is Alcohol dehydrogenase (adh).